Here is a 310-residue protein sequence, read N- to C-terminus: uncharacterized protein (310 aa).

Positions 269–307 (DLAELERKKSLAEIHKKAAMAKKREEKKKIKQELKKSAK) form a coiled coil. A compositionally biased stretch (basic and acidic residues) spans 290 to 304 (KKREEKKKIKQELKK). Positions 290–310 (KKREEKKKIKQELKKSAKGKK) are disordered.

This is an uncharacterized protein from Magallana gigas (Pacific oyster).